A 119-amino-acid polypeptide reads, in one-letter code: Large ribosomal subunit protein uL14 (119 aa).

This sequence belongs to the universal ribosomal protein uL14 family. Part of the 50S ribosomal subunit. Forms a cluster with proteins L3 and L19. In the 70S ribosome, L14 and L19 interact and together make contacts with the 16S rRNA in bridges B5 and B8.

Binds to 23S rRNA. Forms part of two intersubunit bridges in the 70S ribosome. The polypeptide is Large ribosomal subunit protein uL14 (Ehrlichia ruminantium (strain Gardel)).